The chain runs to 87 residues: MKTLLLTLVVVTIVCLDLGYTRECYLNPHDTQTCPSGQEICYVKSWCNAWCSSRGKVLEFGCAATCPSVNTGTEIKCCSADKCNTYP.

An N-terminal signal peptide occupies residues 1–21 (MKTLLLTLVVVTIVCLDLGYT). Intrachain disulfides connect C24/C41, C34/C62, C47/C51, C66/C77, and C78/C83.

Belongs to the three-finger toxin family. Long-chain subfamily. Type II alpha-neurotoxin sub-subfamily. As to expression, expressed by the venom gland.

The protein localises to the secreted. Functionally, binds with high affinity to muscular (tested on Torpedo marmorata, Kd=1.6 nM) and neuronal (chimeric alpha-7/CHRNA7, Kd=3 nM) nicotinic acetylcholine receptor (nAChR) and inhibits acetylcholine from binding to the receptor, thereby impairing neuromuscular and neuronal transmission. Also shows a very weak inhibition on GABA(A) receptors. The toxin (10 uM) inhibits 83% of current in channels composed of alpha-1-beta-3-gamma-2 (GABRA1-GABRB3-GABRG2) subunits, 39% of current in channels composed of alpha-2-beta-2-gamma-2 (GABRA2-GABRB2-GABRG2) subunits, and 33% of current in channels composed of alpha-5-beta-2-gamma-2 (GABRA5-GABRB2-GABRG2) subunits. This is Alpha-elapitoxin-Ls2a from Laticauda semifasciata (Black-banded sea krait).